The chain runs to 146 residues: Hemoglobin subunit beta (146 aa).

At Val-1 the chain carries N-acetylvaline. Residues 2–146 (HLSADEKNAL…VANALAHKYH (145 aa)) enclose the Globin domain. Position 44 is a phosphoserine (Ser-44). Lys-59 carries the post-translational modification N6-acetyllysine. His-63 lines the heme b pocket. Lys-82 carries the N6-acetyllysine modification. His-92 serves as a coordination point for heme b. Position 93 is an S-nitrosocysteine (Cys-93). Position 144 is an N6-acetyllysine (Lys-144).

Belongs to the globin family. As to quaternary structure, heterotetramer of two alpha chains and two beta chains. In terms of tissue distribution, red blood cells.

Its function is as follows. Involved in oxygen transport from the lung to the various peripheral tissues. The protein is Hemoglobin subunit beta of Sciurus carolinensis (Eastern gray squirrel).